Reading from the N-terminus, the 438-residue chain is Battenin (438 aa).

Positions 1–25 (MGGCAGSRRRLSDSEGEETVPEPRL) are disordered. The Cytoplasmic portion of the chain corresponds to 1-37 (MGGCAGSRRRLSDSEGEETVPEPRLPLLDHQGAHWKN). Phosphoserine occurs at positions 12 and 14. A helical membrane pass occupies residues 38–58 (AVGFWLLGLCNNFSYVVMLSA). The Lumenal segment spans residues 59–127 (AHDILSHERT…GLHLLPYSPR (69 aa)). Asparagine 71 and asparagine 85 each carry an N-linked (GlcNAc...) asparagine glycan. The helical transmembrane segment at 128–148 (VLVSGICAAGSFVLVAFSHSV) threads the bilayer. The Cytoplasmic portion of the chain corresponds to 149–151 (GTS). Residues 152-172 (LCGVVLASISSGLGEVTFLSL) traverse the membrane as a helical segment. Residues 173 to 182 (TAFYPRAVIS) are Lumenal-facing. Residues 183 to 203 (WWSSGTGGAGLLGALSYLGLT) traverse the membrane as a helical segment. The Cytoplasmic segment spans residues 204–277 (QAGLSPQQTL…SLSLRERWTV (74 aa)). The segment at 237 to 268 (QDPGGEEEAESSARQPLIRTEAPESKPGSSSS) is disordered. The short motif at 242-244 (EEE) is the Lysosomal targeting motif element. Positions 253–254 (LI) match the Lysosomal targeting motif. Required for AP1G1, AP2A2 and AP3D1 interaction motif. Residues 278-298 (FKGLLWYIVPLVVVYFAEYFI) form a helical membrane-spanning segment. The Lumenal segment spans residues 299 to 346 (NQGLFELLFFRNTSLSHAQQYRWYQMLYQAGVFASRSSLRCCHIRFTW). Asparagine 310 carries an N-linked (GlcNAc...) asparagine glycan. A helical transmembrane segment spans residues 347–367 (ALALLQCLNLAFLLADVWFGF). The Cytoplasmic portion of the chain corresponds to 368-438 (LLSIYFVFLI…PLHDFLCQLS (71 aa)). The Lysosomal targeting motif motif lies at 409–419 (MATTCISDTLG). Cysteine 435 carries the post-translational modification Cysteine methyl ester. A lipid anchor (S-farnesyl cysteine) is attached at cysteine 435. Residues 436–438 (QLS) constitute a propeptide, removed in mature form.

It belongs to the battenin family. In terms of assembly, interacts with DCTN1, KIF3A, RAB7A and RILP. Interacts with CLN5. Highly glycosylated. In terms of processing, farnesylation is important for trafficking to lysosomes.

It localises to the lysosome membrane. It is found in the late endosome. The protein localises to the lysosome. In terms of biological role, mediates microtubule-dependent, anterograde transport connecting the Golgi network, endosomes, autophagosomes, lysosomes and plasma membrane, and participates in several cellular processes such as regulation of lysosomal pH, lysosome protein degradation, receptor-mediated endocytosis, autophagy, transport of proteins and lipids from the TGN, apoptosis and synaptic transmission. Facilitates the proteins transport from trans-Golgi network (TGN)-to other membrane compartments such as transport of microdomain-associated proteins to the plasma membrane, IGF2R transport to the lysosome where it regulates the CTSD release leading to regulation of CTSD maturation and thereby APP intracellular processing. Moreover regulates CTSD activity in response to osmotic stress. Also binds galactosylceramide and transports it from the trans Golgi to the rafts, which may have immediate and downstream effects on cell survival by modulating ceramide synthesis. At the plasma membrane, regulates actin-dependent events including filopodia formation, cell migration, and pinocytosis through ARF1-CDC42 pathway and also the cytoskeleton organization through interaction with MYH10 and fodrin leading to the regulation of the plasma membrane association of Na+, K+ ATPase complex. Regulates synaptic transmission in the amygdala, hippocampus, and cerebellum through regulation of synaptic vesicles density and their proximity to active zones leading to modulation of short-term plasticity and age-dependent anxious behavior, learning and memory. Regulates autophagic vacuoles (AVs) maturation by modulating the trafficking between endocytic and autophagolysosomal/lysosomal compartments, which involves vesicle fusion leading to regulation of degradation process. Also participates in cellular homeostasis of compounds such as, water, ions, amino acids, proteins and lipids in several tissue namely in brain and kidney through regulation of their transport and synthesis. This chain is Battenin, found in Macaca fascicularis (Crab-eating macaque).